The sequence spans 274 residues: Large ribosomal subunit protein uL2 (274 aa).

2 disordered regions span residues 37–60 and 224–252; these read QHQKSGRNNNGHITTRHKGGGHKH and AMNPIDHPHGGGEGRTGEGRHAVDPWGNL. The span at 50-60 shows a compositional bias: basic residues; the sequence is TTRHKGGGHKH. A compositionally biased stretch (basic and acidic residues) spans 229–246; sequence DHPHGGGEGRTGEGRHAV.

It belongs to the universal ribosomal protein uL2 family. In terms of assembly, part of the 50S ribosomal subunit. Forms a bridge to the 30S subunit in the 70S ribosome.

Functionally, one of the primary rRNA binding proteins. Required for association of the 30S and 50S subunits to form the 70S ribosome, for tRNA binding and peptide bond formation. It has been suggested to have peptidyltransferase activity; this is somewhat controversial. Makes several contacts with the 16S rRNA in the 70S ribosome. In Paracidovorax citrulli (strain AAC00-1) (Acidovorax citrulli), this protein is Large ribosomal subunit protein uL2.